Reading from the N-terminus, the 478-residue chain is RNA-binding protein 42 (478 aa).

Over residues 1-20 (MASAMAGAGPAPGLPVAGGP) the composition is skewed to low complexity. Residues 1 to 33 (MASAMAGAGPAPGLPVAGGPVVPGPGVGIPGKS) form a disordered region. A2 carries the N-acetylalanine modification. S133 carries the phosphoserine modification. 4 positions are modified to asymmetric dimethylarginine: R151, R156, R166, and R179. Disordered stretches follow at residues 171–207 (LSSA…MLPP) and 317–354 (SLRP…PEKL). Residues 193 to 205 (PPLPGPPGPPMML) are compositionally biased toward pro residues. Residues 234–478 (ELGLGLGLGL…QKEKKKLGLR (245 aa)) form a necessary for interaction with HNRNPK region. The span at 343 to 354 (GEDKKKGKPEKL) shows a compositional bias: basic and acidic residues. The RRM domain maps to 379–457 (FRIFCGDLGN…RPIKLRKSMW (79 aa)).

Belongs to the RRM RBM42 family. Interacts with HNRNPK. Expressed in cell lines (at protein level). Expressed in heart, brain, spleen, lung, liver, skeletal muscle, kidney and testis.

It is found in the nucleus. It localises to the cytoplasm. Its function is as follows. Binds (via the RRM domain) to the 3'-untranslated region (UTR) of CDKN1A mRNA. The chain is RNA-binding protein 42 (Rbm42) from Mus musculus (Mouse).